The following is a 228-amino-acid chain: Putative N-acetylmannosamine-6-phosphate 2-epimerase (228 aa).

Belongs to the NanE family.

It carries out the reaction an N-acyl-D-glucosamine 6-phosphate = an N-acyl-D-mannosamine 6-phosphate. It functions in the pathway amino-sugar metabolism; N-acetylneuraminate degradation; D-fructose 6-phosphate from N-acetylneuraminate: step 3/5. In terms of biological role, converts N-acetylmannosamine-6-phosphate (ManNAc-6-P) to N-acetylglucosamine-6-phosphate (GlcNAc-6-P). The polypeptide is Putative N-acetylmannosamine-6-phosphate 2-epimerase (Lactiplantibacillus plantarum (strain ATCC BAA-793 / NCIMB 8826 / WCFS1) (Lactobacillus plantarum)).